A 414-amino-acid chain; its full sequence is Glutamyl-tRNA reductase (414 aa).

Residues 49–52 (TCNR), Ser108, 113–115 (EPQ), and Gln119 contribute to the substrate site. The Nucleophile role is filled by Cys50. 188–193 (GAGQTG) contacts NADP(+).

It belongs to the glutamyl-tRNA reductase family. In terms of assembly, homodimer.

The enzyme catalyses (S)-4-amino-5-oxopentanoate + tRNA(Glu) + NADP(+) = L-glutamyl-tRNA(Glu) + NADPH + H(+). It functions in the pathway porphyrin-containing compound metabolism; protoporphyrin-IX biosynthesis; 5-aminolevulinate from L-glutamyl-tRNA(Glu): step 1/2. Its function is as follows. Catalyzes the NADPH-dependent reduction of glutamyl-tRNA(Glu) to glutamate 1-semialdehyde (GSA). This is Glutamyl-tRNA reductase from Francisella tularensis subsp. holarctica (strain LVS).